A 59-amino-acid chain; its full sequence is UPF0337 protein MM_2677 (59 aa).

2 stretches are compositionally biased toward basic and acidic residues: residues 1–24 (MKEG…KESA) and 33–59 (MEAK…EFEK). The disordered stretch occupies residues 1–59 (MKEGTKEEMEGKFSKAKGEIKESAGEMTGDIEMEAKGEAEKRKGEAQEKVGKIRKEFEK).

It belongs to the UPF0337 (CsbD) family.

The polypeptide is UPF0337 protein MM_2677 (Methanosarcina mazei (strain ATCC BAA-159 / DSM 3647 / Goe1 / Go1 / JCM 11833 / OCM 88) (Methanosarcina frisia)).